The following is a 489-amino-acid chain: Inactive receptor-like serine/threonine-protein kinase At2g40270 (489 aa).

The signal sequence occupies residues 1–23 (MLFKMRSFVAFVLLLSWFGSCCS). Residues 24 to 139 (LKDQAVDFLK…PRNSHSSVPL (116 aa)) are Extracellular-facing. Residues 67–130 (KDLPSRKDRK…SAPLANSPIP (64 aa)) form a disordered region. Residues 81 to 90 (AATTTPSSSP) are compositionally biased toward low complexity. The span at 99 to 116 (TKASTVSEPQKRSSTQDV) shows a compositional bias: polar residues. A compositionally biased stretch (low complexity) spans 117 to 130 (SPSPSAPLANSPIP). A helical membrane pass occupies residues 140–160 (VVGCVGGAFFLLLVATGLYFF). The Cytoplasmic segment spans residues 161–489 (TSKAGKTVNP…WAELEVLSTA (329 aa)). The Protein kinase domain occupies 200–460 (EDFSNVIGSC…PTMQEVTGWL (261 aa)).

The protein belongs to the protein kinase superfamily. Ser/Thr protein kinase family.

The protein resides in the cell membrane. The chain is Inactive receptor-like serine/threonine-protein kinase At2g40270 from Arabidopsis thaliana (Mouse-ear cress).